The chain runs to 517 residues: MQPLSKLMAISKPQNLSLHEQREVLRADMCWQQETIPVMETHDSEASRQKFRHFQYLKVSGPHEALSQLRELCLQWLRPEIHTKKQIIEQLVLEQFLAILPEEVRTWVHLQHPNNSEDMVTLIEDVIEMLEDEGMPCKDSAPQMGSIKEKMKAGSPTGKPQEPVTFKDVVVEFSKEEWGQLDSAVKNLYRNVMLENFRNLNSLRKAHLLSKPFESLKLESRKKRWIMEKEIPRKTIFDMKSISGEESSHGVIVTRLTESGHPSSDVWKGENWLYRNQKKWDINLPQEAFIPETSYTDEEDFECSENKETFDINSVSSICAIQQGIPSRKGSPKCDKFKTQFKFNLDSVGKQHSEYEYVNDLSLRTDIRHQKSHTTMNSYECYQCGKAFCRSSSLIRHQIIHTGEKPYKCSECGRFFNRRTNLTKHQKLHAEVKACTSNKCGKAVSKSEDGNNPALHFGNNFYECVNCGKSFNRSSSLIRHQMIHTGEKPFKCKECNKAFNRSSNLVKHQKLHTRDKS.

Residues 48–126 (RQKFRHFQYL…EDMVTLIEDV (79 aa)) enclose the SCAN box domain. One can recognise a KRAB domain in the interval 164–237 (VTFKDVVVEF…EKEIPRKTIF (74 aa)). C2H2-type zinc fingers lie at residues 379-401 (YECY…QIIH), 407-429 (YKCS…QKLH), 462-484 (YECV…QMIH), and 490-512 (FKCK…QKLH).

Belongs to the krueppel C2H2-type zinc-finger protein family.

It is found in the nucleus. May be involved in transcriptional regulation. This is Zinc finger protein 215 (ZNF215) from Pongo abelii (Sumatran orangutan).